A 358-amino-acid chain; its full sequence is Fructose-bisphosphate aldolase 1, cytoplasmic (358 aa).

Arginine 39 contacts substrate. The Proton acceptor role is filled by glutamate 183. Lysine 225 acts as the Schiff-base intermediate with dihydroxyacetone-P in catalysis. Residues 266-268 and arginine 298 contribute to the substrate site; that span reads SGG.

This sequence belongs to the class I fructose-bisphosphate aldolase family. Homotetramer. In terms of tissue distribution, expressed in callus.

The protein resides in the cytoplasm. It is found in the cytosol. It carries out the reaction beta-D-fructose 1,6-bisphosphate = D-glyceraldehyde 3-phosphate + dihydroxyacetone phosphate. Its pathway is carbohydrate degradation; glycolysis; D-glyceraldehyde 3-phosphate and glycerone phosphate from D-glucose: step 4/4. In terms of biological role, fructose-bisphosphate aldolase that plays a key role in glycolysis and gluconeogenesis. Involved in gibberellin-mediated root growth. May be regulated by CDPK13. Associates with vacuolar proton ATPase (V-ATPase) and may regulate the V-ATPase-mediated control of root cell elongation. This chain is Fructose-bisphosphate aldolase 1, cytoplasmic, found in Oryza sativa subsp. japonica (Rice).